The following is a 327-amino-acid chain: Phenylalanine--tRNA ligase alpha subunit (327 aa).

Position 252 (glutamate 252) interacts with Mg(2+).

The protein belongs to the class-II aminoacyl-tRNA synthetase family. Phe-tRNA synthetase alpha subunit type 1 subfamily. Tetramer of two alpha and two beta subunits. Mg(2+) serves as cofactor.

It localises to the cytoplasm. It catalyses the reaction tRNA(Phe) + L-phenylalanine + ATP = L-phenylalanyl-tRNA(Phe) + AMP + diphosphate + H(+). This is Phenylalanine--tRNA ligase alpha subunit from Sodalis glossinidius (strain morsitans).